Here is a 261-residue protein sequence, read N- to C-terminus: Kallikrein 1-related peptidase b26 (261 aa).

A signal peptide spans 1-18 (MWFLILFPALSLGGIDAA). Positions 19-24 (PPLQSR) are cleaved as a propeptide — activation peptide. The region spanning 25 to 258 (VVGGFNCEKN…FNSWIKDTMM (234 aa)) is the Peptidase S1 domain. 5 disulfide bridges follow: cysteine 31–cysteine 173, cysteine 50–cysteine 66, cysteine 152–cysteine 219, cysteine 184–cysteine 198, and cysteine 209–cysteine 234. Histidine 65 acts as the Charge relay system in catalysis. N-linked (GlcNAc...) asparagine glycosylation occurs at asparagine 102. Catalysis depends on aspartate 120, which acts as the Charge relay system. The active-site Charge relay system is the serine 213.

It belongs to the peptidase S1 family. Kallikrein subfamily.

It catalyses the reaction Preferential cleavage of Arg-|-Xaa bonds in small molecule substrates. Highly selective action to release kallidin (lysyl-bradykinin) from kininogen involves hydrolysis of Met-|-Xaa or Leu-|-Xaa.. Glandular kallikreins cleave Met-Lys and Arg-Ser bonds in kininogen to release Lys-bradykinin. In terms of biological role, prorenin-converting enzyme cleaves mouse REN-2 prorenin at a dibasic site to yield mature renin. In Mus musculus (Mouse), this protein is Kallikrein 1-related peptidase b26 (Klk1b26).